A 1598-amino-acid polypeptide reads, in one-letter code: Structural maintenance of chromosomes flexible hinge domain-containing protein GMI1 (1598 aa).

Positions 1191-1218 (VTSAPTSEREESGYSTPHSKTTPPPESG) are disordered. Coiled coils occupy residues 1258-1301 (TEDL…ASLE) and 1565-1595 (EEMMTEENRSLRRLVKKLKKANEKYQNFTAM).

In terms of tissue distribution, highly expressed in closed buds and open flowers. Expressed at low levels in roots, stems, cauline leaves and siliques. Expressed in the region of the shoot and floral meristems.

It is found in the nucleus. Functionally, contributes to DNA double-strand break (DSB) repair via somatic homologous recombination. Functions downstream of ATM. In Arabidopsis thaliana (Mouse-ear cress), this protein is Structural maintenance of chromosomes flexible hinge domain-containing protein GMI1.